The sequence spans 491 residues: Carboxypeptidase SOL1 (491 aa).

The first 25 residues, 1-25, serve as a signal peptide directing secretion; the sequence is MSKLRFFQSLLISTVICFFLPSINA. The Extracellular segment spans residues 26–452; the sequence is RGGHSDHIHP…LLTQFFTETN (427 aa). A glycan (N-linked (GlcNAc...) asparagine) is linked at asparagine 39. The Peptidase M14 domain maps to 64–338; it reads GYMTNDDLEK…KSMLNLVASL (275 aa). 2 residues coordinate Zn(2+): histidine 125 and glutamate 128. Substrate contacts are provided by residues 125 to 128 and 186 to 187; these read HGDE and NR. Histidine 226 is a Zn(2+) binding site. N-linked (GlcNAc...) asparagine glycosylation occurs at asparagine 268. Residue tyrosine 286 coordinates substrate. The active-site Proton donor/acceptor is the glutamate 308. The helical transmembrane segment at 453–470 threads the bilayer; the sequence is NGITLTLFVVVVFLCFLL. Residues 471-491 lie on the Cytoplasmic side of the membrane; sequence QRRVRFNLWKQRQSSRRSITV.

Belongs to the peptidase M14 family. Zn(2+) is required as a cofactor. In terms of tissue distribution, expressed in roots, shoots, leaves, flowers and siliques.

The protein resides in the endosome membrane. Functionally, possesses in vitro carboxypeptidase activity against the C-terminal arginine and lysine residues. Involved in the maturation of CLE19. Removes the C-terminal arginine residue of CLE19 proprotein. The cleavage of the C-terminal arginine residue is necessary for CLE19 activity in vivo. Is not involved in generating active CLV3. Is not involved in CLE19 or CLV3 perception. The polypeptide is Carboxypeptidase SOL1 (Arabidopsis thaliana (Mouse-ear cress)).